The chain runs to 301 residues: Ornithine carbamoyltransferase (301 aa).

Carbamoyl phosphate is bound by residues 46–49, glutamine 73, arginine 97, and 124–127; these read STRT and HPCQ. Residues asparagine 154, aspartate 218, and 222–223 contribute to the L-ornithine site; that span reads SM. Residues 258 to 259 and arginine 286 contribute to the carbamoyl phosphate site; that span reads CL.

Belongs to the aspartate/ornithine carbamoyltransferase superfamily. OTCase family.

It is found in the cytoplasm. It carries out the reaction carbamoyl phosphate + L-ornithine = L-citrulline + phosphate + H(+). The protein operates within amino-acid biosynthesis; L-arginine biosynthesis; L-arginine from L-ornithine and carbamoyl phosphate: step 1/3. Reversibly catalyzes the transfer of the carbamoyl group from carbamoyl phosphate (CP) to the N(epsilon) atom of ornithine (ORN) to produce L-citrulline. In Methanothermobacter thermautotrophicus (strain ATCC 29096 / DSM 1053 / JCM 10044 / NBRC 100330 / Delta H) (Methanobacterium thermoautotrophicum), this protein is Ornithine carbamoyltransferase (argF).